A 327-amino-acid polypeptide reads, in one-letter code: MEAIKGSDVNVPDAVFAWLLDGRGGVKPLEDNDVIDSQHPCWLHLNYTHPDSARWLASTPLLPNNVRDALAGESSRPRVSRMGEGTLITLRCINGSTDERPDQLVAMRLYMDERFIVSTRQRKVLALDDVVSDLQEGTGPVDCGGWLVDVCDALTDHASEFIEELHDKIIDLEDNLLDQQIPPRGFLALLRKQLIVMRRYMAPQRDVYARLASERLPWMSDDHRRRMQDIADRLGRGLDEIDACIARTGIMADEIAQVMQESLARRTYTMSLMAMVFLPSTFLTGLFGVNLGGIPGGGWRFGFSLFCILLVVLIGGVTLWLHRSKWL.

The Cytoplasmic portion of the chain corresponds to 1–273 (MEAIKGSDVN…ARRTYTMSLM (273 aa)). A helical transmembrane segment spans residues 274–294 (AMVFLPSTFLTGLFGVNLGGI). Residues 295–300 (PGGGWR) lie on the Periplasmic side of the membrane. A helical membrane pass occupies residues 301 to 321 (FGFSLFCILLVVLIGGVTLWL). Residues 322–327 (HRSKWL) lie on the Cytoplasmic side of the membrane.

Belongs to the CorA metal ion transporter (MIT) (TC 1.A.35) family.

Its subcellular location is the cell inner membrane. It catalyses the reaction Zn(2+)(out) + H(+)(out) = Zn(2+)(in) + H(+)(in). Its function is as follows. Zinc transporter. Acts as a Zn(2+):proton symporter, which likely mediates zinc ion uptake. The sequence is that of Zinc transport protein ZntB from Salmonella agona (strain SL483).